A 365-amino-acid chain; its full sequence is 2-aminoethylphosphonate--pyruvate transaminase (365 aa).

The residue at position 194 (Lys194) is an N6-(pyridoxal phosphate)lysine.

Belongs to the class-V pyridoxal-phosphate-dependent aminotransferase family. PhnW subfamily. As to quaternary structure, homodimer. Requires pyridoxal 5'-phosphate as cofactor.

It carries out the reaction (2-aminoethyl)phosphonate + pyruvate = phosphonoacetaldehyde + L-alanine. Its function is as follows. Involved in phosphonate degradation. The protein is 2-aminoethylphosphonate--pyruvate transaminase of Bacillus cytotoxicus (strain DSM 22905 / CIP 110041 / 391-98 / NVH 391-98).